We begin with the raw amino-acid sequence, 356 residues long: Arginine kinase 1 (356 aa).

In terms of domain architecture, Phosphagen kinase N-terminal spans 6-91 (VLAKLEEGYA…FDPIIEDYHG (86 aa)). Residue 64-68 (GVGIY) participates in substrate binding. Positions 119–356 (YVISTRVRCG…TELIKLEKSL (238 aa)) constitute a Phosphagen kinase C-terminal domain. Residues 122–126 (STRVR) and H185 each bind ATP. E225 contributes to the substrate binding site. An ATP-binding site is contributed by R229. A substrate-binding site is contributed by C271. Residues 280–284 (RASVH) and 309–314 (RGTRGE) contribute to the ATP site. E314 contacts substrate.

The protein belongs to the ATP:guanido phosphotransferase family.

The enzyme catalyses L-arginine + ATP = N(omega)-phospho-L-arginine + ADP + H(+). The protein is Arginine kinase 1 of Drosophila melanogaster (Fruit fly).